A 451-amino-acid chain; its full sequence is tRNA modification GTPase MnmE (451 aa).

(6S)-5-formyl-5,6,7,8-tetrahydrofolate is bound by residues R25, E82, and K121. The 158-residue stretch at 217 to 374 folds into the TrmE-type G domain; it reads GMSVVILGRP…LKQHLKTEMG (158 aa). N227 serves as a coordination point for K(+). GTP-binding positions include 227-232, 246-252, and 271-274; these read NAGKSS, TDIAGTT, and DTAG. S231 serves as a coordination point for Mg(2+). Residues T246, I248, and T251 each coordinate K(+). T252 serves as a coordination point for Mg(2+). K451 is a (6S)-5-formyl-5,6,7,8-tetrahydrofolate binding site.

The protein belongs to the TRAFAC class TrmE-Era-EngA-EngB-Septin-like GTPase superfamily. TrmE GTPase family. In terms of assembly, homodimer. Heterotetramer of two MnmE and two MnmG subunits. K(+) is required as a cofactor.

It localises to the cytoplasm. Exhibits a very high intrinsic GTPase hydrolysis rate. Involved in the addition of a carboxymethylaminomethyl (cmnm) group at the wobble position (U34) of certain tRNAs, forming tRNA-cmnm(5)s(2)U34. The polypeptide is tRNA modification GTPase MnmE (Hydrogenovibrio crunogenus (strain DSM 25203 / XCL-2) (Thiomicrospira crunogena)).